Consider the following 85-residue polypeptide: Anti-neuroexcitation peptide 3 (85 aa).

The N-terminal stretch at 1–21 (MKLSLLLVISASMLIDGLVNA) is a signal peptide. The 61-residue stretch at 22-82 (DGYIRGSNGC…TWKSESNTCG (61 aa)) folds into the LCN-type CS-alpha/beta domain. Intrachain disulfides connect Cys31–Cys81, Cys35–Cys56, Cys42–Cys63, and Cys46–Cys65.

This sequence belongs to the long (4 C-C) scorpion toxin superfamily. Sodium channel inhibitor family. Beta subfamily. In terms of tissue distribution, expressed by the venom gland.

Its subcellular location is the secreted. In terms of biological role, binds to sodium channels (Nav) and inhibits them. Recombinant ANEP delays the convulsion seizure of model animals by 18% and shows anti-neuroexcitatory activity. This is Anti-neuroexcitation peptide 3 from Olivierus martensii (Manchurian scorpion).